Reading from the N-terminus, the 372-residue chain is Bifunctional enzyme IspD/IspF (372 aa).

A 2-C-methyl-D-erythritol 4-phosphate cytidylyltransferase region spans residues 1–210; that stretch reads MLDLSLIMLG…LNLNSPSNDI (210 aa). A 2-C-methyl-D-erythritol 2,4-cyclodiphosphate synthase region spans residues 211–372; sequence FCGNGFDVHA…LKYFNWRNVL (162 aa). Residues Asp-217 and His-219 each coordinate a divalent metal cation. Residues 217–219 and 243–244 each bind 4-CDP-2-C-methyl-D-erythritol 2-phosphate; these read DVH and HS. His-251 is an a divalent metal cation binding site. Residues 265–267, 270–274, 341–344, Phe-348, and Arg-351 contribute to the 4-CDP-2-C-methyl-D-erythritol 2-phosphate site; these read DIG, YPDND, and TTTE.

This sequence in the N-terminal section; belongs to the IspD/TarI cytidylyltransferase family. IspD subfamily. It in the C-terminal section; belongs to the IspF family. It depends on a divalent metal cation as a cofactor.

It carries out the reaction 2-C-methyl-D-erythritol 4-phosphate + CTP + H(+) = 4-CDP-2-C-methyl-D-erythritol + diphosphate. The catalysed reaction is 4-CDP-2-C-methyl-D-erythritol 2-phosphate = 2-C-methyl-D-erythritol 2,4-cyclic diphosphate + CMP. Its pathway is isoprenoid biosynthesis; isopentenyl diphosphate biosynthesis via DXP pathway; isopentenyl diphosphate from 1-deoxy-D-xylulose 5-phosphate: step 2/6. The protein operates within isoprenoid biosynthesis; isopentenyl diphosphate biosynthesis via DXP pathway; isopentenyl diphosphate from 1-deoxy-D-xylulose 5-phosphate: step 4/6. In terms of biological role, bifunctional enzyme that catalyzes the formation of 4-diphosphocytidyl-2-C-methyl-D-erythritol from CTP and 2-C-methyl-D-erythritol 4-phosphate (MEP) (IspD), and catalyzes the conversion of 4-diphosphocytidyl-2-C-methyl-D-erythritol 2-phosphate (CDP-ME2P) to 2-C-methyl-D-erythritol 2,4-cyclodiphosphate (ME-CPP) with a corresponding release of cytidine 5-monophosphate (CMP) (IspF). This chain is Bifunctional enzyme IspD/IspF, found in Campylobacter fetus subsp. fetus (strain 82-40).